A 290-amino-acid chain; its full sequence is N-acetylmannosamine kinase (290 aa).

ATP-binding positions include 5-12 and 132-139; these read AIDIGGTK and GVGGGVVS. Residues histidine 156, cysteine 166, cysteine 168, and cysteine 173 each contribute to the Zn(2+) site.

It belongs to the ROK (NagC/XylR) family. NanK subfamily. As to quaternary structure, homodimer.

It carries out the reaction an N-acyl-D-mannosamine + ATP = an N-acyl-D-mannosamine 6-phosphate + ADP + H(+). It functions in the pathway amino-sugar metabolism; N-acetylneuraminate degradation; D-fructose 6-phosphate from N-acetylneuraminate: step 2/5. Catalyzes the phosphorylation of N-acetylmannosamine (ManNAc) to ManNAc-6-P. The sequence is that of N-acetylmannosamine kinase from Citrobacter koseri (strain ATCC BAA-895 / CDC 4225-83 / SGSC4696).